Consider the following 142-residue polypeptide: Mitochondrial import receptor subunit TOM22 homolog (142 aa).

Over residues Met1–Glu18 the composition is skewed to low complexity. The segment at Met1 to Asp41 is disordered. Ala2 bears the N-acetylalanine mark. Residues Ala2–Ala83 lie on the Cytoplasmic side of the membrane. Position 15 is a phosphoserine (Ser15). Residues Lys27–Asp41 are compositionally biased toward acidic residues. The segment at Asp41–Gly50 is import sequence; necessary for mitochondrion outer membrane localization and integration in the TOM complex. Thr43 carries the phosphothreonine modification. The residue at position 45 (Ser45) is a Phosphoserine. Residues Ala83 to Thr103 form a TMD; necessary for mitochondrion outer membrane localization and integration in the TOM complex region. Residues Ala84 to Thr103 traverse the membrane as a helical segment. At Glu104–Met142 the chain is on the mitochondrial intermembrane side. The tract at residues Pro123–Met142 is C-tail signal; necessary for mitochondrion outer membrane localization and integration in the TOM complex.

Belongs to the Tom22 family. In terms of assembly, forms part of the preprotein translocase complex of the outer mitochondrial membrane (TOM complex) which consists of at least 7 different proteins (TOMM5, TOMM6, TOMM7, TOMM20, TOMM22, TOMM40 and TOMM70). Interacts with PPP2R2B and TOMM40.

Its subcellular location is the mitochondrion outer membrane. In terms of biological role, central receptor component of the translocase of the outer membrane of mitochondria (TOM complex) responsible for the recognition and translocation of cytosolically synthesized mitochondrial preproteins. Together with the peripheral receptor TOM20 functions as the transit peptide receptor and facilitates the movement of preproteins into the translocation pore. Required for the translocation across the mitochondrial outer membrane of cytochrome P450 monooxygenases. The polypeptide is Mitochondrial import receptor subunit TOM22 homolog (Tomm22) (Mus musculus (Mouse)).